The chain runs to 122 residues: Copper metallothionein 1 (122 aa).

Residues 1–35 (MACNCPPQKNTACCSTSEAQDKCTCQKGNCECKAC) are cys-rich copper-binding 1. Residues 36–50 (PNSTKTSESGGKAST) form a spacer B1 region. Residues 51–72 (CNCGGSGEACTCPPGQCACDKC) are cys-rich copper-binding 2. The tract at residues 73 to 81 (PKKAKSVST) is spacer B2. A cys-rich copper-binding 3 region spans residues 82–103 (CGCGGSGAACSCPPGKCACDNC). Residues 104–113 (PKQAQEKVSS) are spacer B3. A cys-rich copper-binding 4 region spans residues 114–122 (CACSGSGAA).

This sequence belongs to the metallothionein superfamily.

It is found in the cytoplasm. It localises to the cell cortex. Functionally, copper metallothionein that protects the cell against copper toxicity by tightly chelating copper ions. Required for antioxidant-mediated growth rescue in the presence of fluconazole. Acts as a critical factors for lung colonization and virulence. This chain is Copper metallothionein 1, found in Cryptococcus neoformans var. grubii serotype A (strain H99 / ATCC 208821 / CBS 10515 / FGSC 9487) (Filobasidiella neoformans var. grubii).